Reading from the N-terminus, the 301-residue chain is tRNA pseudouridine synthase B (301 aa).

Asp-45 (nucleophile) is an active-site residue.

It belongs to the pseudouridine synthase TruB family. Type 1 subfamily.

The catalysed reaction is uridine(55) in tRNA = pseudouridine(55) in tRNA. Functionally, responsible for synthesis of pseudouridine from uracil-55 in the psi GC loop of transfer RNAs. The chain is tRNA pseudouridine synthase B from Streptomyces coelicolor (strain ATCC BAA-471 / A3(2) / M145).